Consider the following 77-residue polypeptide: DNA-directed RNA polymerase subunit Rpo10 (77 aa).

Residues Cys7, Cys10, Cys44, and Cys45 each contribute to the Zn(2+) site.

It belongs to the archaeal Rpo10/eukaryotic RPB10 RNA polymerase subunit family. As to quaternary structure, part of the RNA polymerase complex. It depends on Zn(2+) as a cofactor.

The protein localises to the cytoplasm. The enzyme catalyses RNA(n) + a ribonucleoside 5'-triphosphate = RNA(n+1) + diphosphate. Functionally, DNA-dependent RNA polymerase (RNAP) catalyzes the transcription of DNA into RNA using the four ribonucleoside triphosphates as substrates. The polypeptide is DNA-directed RNA polymerase subunit Rpo10 (Aeropyrum pernix (strain ATCC 700893 / DSM 11879 / JCM 9820 / NBRC 100138 / K1)).